A 217-amino-acid polypeptide reads, in one-letter code: 25 kDa ookinete surface antigen (217 aa).

An N-terminal signal peptide occupies residues 1-16; it reads MNKLYSLFLFLFIQLS. The region spanning 30-59 is the EGF-like 1; truncated domain; it reads CKRGFLIQMSGHLECKCENDLVLVNEETCE. EGF-like domains lie at 61-106, 106-150, and 153-193; these read KVLK…NVCI, IPNE…NKCS, and GETK…SICT. Disulfide bonds link Cys65-Cys80, Cys74-Cys92, Cys94-Cys105, Cys110-Cys120, Cys115-Cys133, Cys135-Cys149, Cys157-Cys168, Cys161-Cys177, and Cys179-Cys192. An N-linked (GlcNAc...) asparagine glycan is attached at Asn112. Asn165 and Asn187 each carry an N-linked (GlcNAc...) asparagine glycan. The GPI-anchor amidated serine moiety is linked to residue Ser196. Residues 197-217 constitute a propeptide, removed in mature form; that stretch reads AYNILNLSIMFILFSVCFFIM. Residue Asn202 is glycosylated (N-linked (GlcNAc...) asparagine).

The protein resides in the cell membrane. The polypeptide is 25 kDa ookinete surface antigen (Plasmodium falciparum (isolate NF54)).